A 261-amino-acid chain; its full sequence is MRDSKRVVLYISIIVLSIFIIGCGKGNEIKEDAKEEQIKKSFAKTLDMYPIKNLEDLYDKEGYRDGEFKKGDKGMWTIYTDFAKSNRPGVLDNEGMVLNLDRNTRTAKGYYFVDTIYDNHENSYSKNYRVEMKNNKIILLDKVEDQKLKERIENFKFFGQYADFKSLKSYNHGDVSINSNVPSYDAKFKMSNKDENVKQLRSRYNIPTDKAPILKMHIDGDLKGSSVGYKKLEIDFSKEENSELSIVDSLNFQPAKNKDDE.

Residues 1 to 22 (MRDSKRVVLYISIIVLSIFIIG) form the signal peptide. Cysteine 23 carries N-palmitoyl cysteine lipidation. Residue cysteine 23 is the site of S-diacylglycerol cysteine attachment.

This sequence belongs to the staphylococcal tandem lipoprotein family.

The protein localises to the cell membrane. This is an uncharacterized protein from Staphylococcus aureus (strain Mu50 / ATCC 700699).